We begin with the raw amino-acid sequence, 199 residues long: MPAIPPKLILASSSRYRRELLSRLRLPFTAISPDVDETPQPGEAPADLALRLSVAKAMAVAATHPGSVVIGSDQVATVDGDPIGKPGGFERAREQLRRLSGRAVEFHSAMAVTDGVHTETADIVTLCRFRTLTDAAIDAYLRAEEPYDTAGSAKAESLGIALMDSIRSDDPTAIIGLPLIALTRMLGRFGLDPLTGHPA.

The active-site Proton acceptor is aspartate 73.

The protein belongs to the Maf family. YceF subfamily. The cofactor is a divalent metal cation.

It is found in the cytoplasm. It carries out the reaction N(7)-methyl-GTP + H2O = N(7)-methyl-GMP + diphosphate + H(+). Functionally, nucleoside triphosphate pyrophosphatase that hydrolyzes 7-methyl-GTP (m(7)GTP). May have a dual role in cell division arrest and in preventing the incorporation of modified nucleotides into cellular nucleic acids. The chain is 7-methyl-GTP pyrophosphatase from Bordetella bronchiseptica (strain ATCC BAA-588 / NCTC 13252 / RB50) (Alcaligenes bronchisepticus).